A 109-amino-acid chain; its full sequence is UPF0122 protein CLH_1195 (109 aa).

This sequence belongs to the UPF0122 family.

In terms of biological role, might take part in the signal recognition particle (SRP) pathway. This is inferred from the conservation of its genetic proximity to ftsY/ffh. May be a regulatory protein. This chain is UPF0122 protein CLH_1195, found in Clostridium botulinum (strain Alaska E43 / Type E3).